Here is a 475-residue protein sequence, read N- to C-terminus: Ribulose bisphosphate carboxylase large chain (475 aa).

Residues 1–2 (MA) constitute a propeptide that is removed on maturation. N-acetylproline is present on proline 3. N6,N6,N6-trimethyllysine is present on lysine 14. Positions 123 and 173 each coordinate substrate. Lysine 175 acts as the Proton acceptor in catalysis. Lysine 177 provides a ligand contact to substrate. Lysine 201, aspartate 203, and glutamate 204 together coordinate Mg(2+). Lysine 201 is modified (N6-carboxylysine). Histidine 294 (proton acceptor) is an active-site residue. Positions 295, 327, and 379 each coordinate substrate.

Belongs to the RuBisCO large chain family. Type I subfamily. In terms of assembly, heterohexadecamer of 8 large chains and 8 small chains. Requires Mg(2+) as cofactor.

The protein resides in the plastid. It localises to the chloroplast. It carries out the reaction 2 (2R)-3-phosphoglycerate + 2 H(+) = D-ribulose 1,5-bisphosphate + CO2 + H2O. It catalyses the reaction D-ribulose 1,5-bisphosphate + O2 = 2-phosphoglycolate + (2R)-3-phosphoglycerate + 2 H(+). RuBisCO catalyzes two reactions: the carboxylation of D-ribulose 1,5-bisphosphate, the primary event in carbon dioxide fixation, as well as the oxidative fragmentation of the pentose substrate in the photorespiration process. Both reactions occur simultaneously and in competition at the same active site. The sequence is that of Ribulose bisphosphate carboxylase large chain from Nephroselmis olivacea (Green alga).